The primary structure comprises 100 residues: Putative pterin-4-alpha-carbinolamine dehydratase (100 aa).

The protein belongs to the pterin-4-alpha-carbinolamine dehydratase family.

It catalyses the reaction (4aS,6R)-4a-hydroxy-L-erythro-5,6,7,8-tetrahydrobiopterin = (6R)-L-erythro-6,7-dihydrobiopterin + H2O. This is Putative pterin-4-alpha-carbinolamine dehydratase from Allorhizobium ampelinum (strain ATCC BAA-846 / DSM 112012 / S4) (Agrobacterium vitis (strain S4)).